The sequence spans 301 residues: Transcription factor bHLH103 (301 aa).

Residues 29–106 (PRSAEIVVDF…LEGLFDSSEQ (78 aa)) enclose the KRAB domain. Disordered stretches follow at residues 161–184 (EKSG…ETPS) and 239–272 (TSPH…PRQD). The 50-residue stretch at 180–229 (LETPSHFPSFKVRKEKLGDRITALQQLVSPFGKTDTASVLHDAIDYIKFL) folds into the bHLH domain. Over residues 239 to 269 (TSPHLNSIGSGEQKQWSDKSSNNTHNQNCSP) the composition is skewed to polar residues.

Homodimer. As to expression, mature root endodermis.

It localises to the nucleus. The polypeptide is Transcription factor bHLH103 (BHLH103) (Arabidopsis thaliana (Mouse-ear cress)).